The sequence spans 231 residues: Large ribosomal subunit protein uL1 (231 aa).

It belongs to the universal ribosomal protein uL1 family. In terms of assembly, part of the 50S ribosomal subunit.

Functionally, binds directly to 23S rRNA. The L1 stalk is quite mobile in the ribosome, and is involved in E site tRNA release. In terms of biological role, protein L1 is also a translational repressor protein, it controls the translation of the L11 operon by binding to its mRNA. The chain is Large ribosomal subunit protein uL1 from Neisseria meningitidis serogroup A / serotype 4A (strain DSM 15465 / Z2491).